Reading from the N-terminus, the 410-residue chain is 3-phosphoshikimate 1-carboxyvinyltransferase (410 aa).

3-phosphoshikimate-binding residues include Lys-27, Ser-28, and Arg-32. Phosphoenolpyruvate is bound at residue Lys-27. Phosphoenolpyruvate-binding residues include Gly-91 and Arg-119. Ser-161, Ser-162, Gln-163, Asp-297, Gln-319, and Lys-323 together coordinate 3-phosphoshikimate. Residue Gln-163 participates in phosphoenolpyruvate binding. The active-site Proton acceptor is Asp-297. Residues Arg-327, Arg-368, and Lys-394 each coordinate phosphoenolpyruvate.

Belongs to the EPSP synthase family. Monomer.

Its subcellular location is the cytoplasm. The catalysed reaction is 3-phosphoshikimate + phosphoenolpyruvate = 5-O-(1-carboxyvinyl)-3-phosphoshikimate + phosphate. The protein operates within metabolic intermediate biosynthesis; chorismate biosynthesis. Its function is as follows. Catalyzes the transfer of the enolpyruvyl moiety of phosphoenolpyruvate (PEP) to the 5-hydroxyl of shikimate-3-phosphate (S3P) to produce enolpyruvyl shikimate-3-phosphate and inorganic phosphate. The chain is 3-phosphoshikimate 1-carboxyvinyltransferase from Pyrococcus abyssi (strain GE5 / Orsay).